The primary structure comprises 405 residues: Magnesium-protoporphyrin IX monomethyl ester [oxidative] cyclase, chloroplastic (405 aa).

The transit peptide at 1-44 (MAAEMALVKPITPKFINPMRTFSSSSKFSTIKMSATSQSNTTTT) directs the protein to the chloroplast. Residues 33 to 47 (MSATSQSNTTTTATK) are compositionally biased toward low complexity. A disordered region spans residues 33 to 54 (MSATSQSNTTTTATKPSKKGNK).

Belongs to the AcsF family. Fe cation is required as a cofactor.

It is found in the plastid. Its subcellular location is the chloroplast. It catalyses the reaction Mg-protoporphyrin IX 13-monomethyl ester + 3 NADPH + 3 O2 + 2 H(+) = 3,8-divinyl protochlorophyllide a + 3 NADP(+) + 5 H2O. It functions in the pathway porphyrin-containing compound metabolism; chlorophyll biosynthesis. Catalyzes the formation of the isocyclic ring in chlorophyll biosynthesis. Mediates the cyclase reaction, which results in the formation of divinylprotochlorophyllide (Pchlide) characteristic of all chlorophylls from magnesium-protoporphyrin IX 13-monomethyl ester (MgPMME). This chain is Magnesium-protoporphyrin IX monomethyl ester [oxidative] cyclase, chloroplastic (CRD1), found in Euphorbia esula (Leafy spurge).